Consider the following 228-residue polypeptide: 7-cyano-7-deazaguanine synthase (228 aa).

Residue 9 to 19 coordinates ATP; it reads YSGGLDSTTCM. Zn(2+) is bound by residues Cys189, Cys199, Cys202, and Cys205.

Belongs to the QueC family. Zn(2+) serves as cofactor.

The enzyme catalyses 7-carboxy-7-deazaguanine + NH4(+) + ATP = 7-cyano-7-deazaguanine + ADP + phosphate + H2O + H(+). It participates in purine metabolism; 7-cyano-7-deazaguanine biosynthesis. Functionally, catalyzes the ATP-dependent conversion of 7-carboxy-7-deazaguanine (CDG) to 7-cyano-7-deazaguanine (preQ(0)). The polypeptide is 7-cyano-7-deazaguanine synthase (Geotalea uraniireducens (strain Rf4) (Geobacter uraniireducens)).